Here is a 406-residue protein sequence, read N- to C-terminus: Endoglucanase 1 (406 aa).

The first 43 residues, 1 to 43, serve as a signal peptide directing secretion; that stretch reads MNSKKIGAMIAAAVLSLIVMTPAATRKIVQRQTRNSSTAVENS. Polar residues-rich tracts occupy residues 30 to 41 and 51 to 62; these read QRQTRNSSTAVE and ENVPVSQTHTND. Residues 30–62 are disordered; it reads QRQTRNSSTAVENSAADESETENVPVSQTHTND. E210 (proton donor) is an active-site residue. The active-site Nucleophile is the E330.

Belongs to the glycosyl hydrolase 5 (cellulase A) family.

The enzyme catalyses Endohydrolysis of (1-&gt;4)-beta-D-glucosidic linkages in cellulose, lichenin and cereal beta-D-glucans.. In Ruminococcus albus, this protein is Endoglucanase 1 (Eg I).